The primary structure comprises 193 residues: uncharacterized protein (193 aa).

This is an uncharacterized protein from Mycoplasma genitalium (strain ATCC 33530 / DSM 19775 / NCTC 10195 / G37) (Mycoplasmoides genitalium).